Consider the following 64-residue polypeptide: Large ribosomal subunit protein bL35 (64 aa).

This sequence belongs to the bacterial ribosomal protein bL35 family.

This chain is Large ribosomal subunit protein bL35, found in Acinetobacter baylyi (strain ATCC 33305 / BD413 / ADP1).